The following is a 422-amino-acid chain: MVGRGSFSSTSSASSINWIPKNTKTSIESVSNTISLSENGQNQDLETVTTKESNVGDSDTTENIKSPFNGQWPFSRRSSQSSSHPVFEETHWSKHSKRPGKLNVLTPTSPSNVNAEVQSISTKTQLSLLNLSPHKHKKPKDGLDLSALQKTLNGSRNFLRGRRDAGGIFGASIPQSLVTNQIINGFGAASLAFAKLGKVRSPLEGRFNLVPISADETWLIVESEVCSLYSGEALHYSLEDLNGILILHLQALIRDTKMNEFVGHLETLFRKATKCLSDSLSPVPEELFLNRIIETWLFFFSSVLPYVQGVFLPIKTKLFDEQEKTQLPYEVNEFCSTNREKLNVHRLALMTFRDYMVLPIANRIQICIGRAESAENALDNAGEVFARLFQILSLLASVRTNDSKEQEITNLATKVRCLLIAS.

Over residues 48-69 (VTTKESNVGDSDTTENIKSPFN) the composition is skewed to polar residues. Positions 48-101 (VTTKESNVGDSDTTENIKSPFNGQWPFSRRSSQSSSHPVFEETHWSKHSKRPGK) are disordered. A phosphoserine mark is found at Ser-109, Ser-132, and Ser-201.

The protein belongs to the BIT61 family. As to quaternary structure, the target of rapamycin complex 2 (TORC2) is composed of at least bit61, pop3/wat1, sin1, ste20 and tor1. In terms of processing, either Thr-23, Thr-25 or Ser-26 and Ser-78 or Ser-79 are phosphorylated as well.

Its subcellular location is the cytoplasm. It is found in the nucleus. Component of TORC2, which regulates multiple cellular processes to control cell growth in response to environmental signals. TORC2 is required for cell survival under various stress conditions. TORC2 positively controls G1 cell-cycle arrest, sexual development and amino acid uptake. Positively regulates amino acid uptake through the control of expression of amino acid permeases. This chain is Target of rapamycin complex 2 subunit bit61, found in Schizosaccharomyces pombe (strain 972 / ATCC 24843) (Fission yeast).